Reading from the N-terminus, the 161-residue chain is MSLVTQIIVNADDELRYPTIGELQSIQDYLTTGSNRIRIATIIRDKEKEIIQKASKQIFQLHPEYIAPGGNAAGSRKRSLCLRDYGWYLRLITYGVLAGDKDSIETIGIIGVREMYNSLGVPIIGMLDAIQCLKEASLEMLGQDDIRIISPYFDYIIRGMS.

N4-methylasparagine is present on Asn71. Residue Cys81 coordinates (2R,3E)-phycocyanobilin.

It belongs to the phycobiliprotein family. In terms of processing, contains one covalently linked bilin chromophore.

It is found in the plastid. It localises to the chloroplast thylakoid membrane. Allophycocyanin is a photosynthetic bile pigment-protein complex with maximum absorption at approximately 650 nanometers. The sequence is that of Allophycocyanin alpha-B chain (apcD) from Pyropia yezoensis (Susabi-nori).